Here is a 126-residue protein sequence, read N- to C-terminus: uncharacterized protein (126 aa).

The next 2 helical transmembrane spans lie at 40–57 (IDKW…VSFF) and 72–94 (ILIA…ILGG).

The protein resides in the cell membrane. This is an uncharacterized protein from Pasteurella multocida (strain Pm70).